Consider the following 305-residue polypeptide: Glycine--tRNA ligase alpha subunit (305 aa).

Belongs to the class-II aminoacyl-tRNA synthetase family. Tetramer of two alpha and two beta subunits.

It is found in the cytoplasm. The enzyme catalyses tRNA(Gly) + glycine + ATP = glycyl-tRNA(Gly) + AMP + diphosphate. This chain is Glycine--tRNA ligase alpha subunit, found in Streptococcus pyogenes serotype M18 (strain MGAS8232).